The primary structure comprises 765 residues: Putative ankyrin repeat protein L371 (765 aa).

ANK repeat units follow at residues 60–89 (NGNYMIFFAIIMNSSTILKKLIKYGARLDV), 93–122 (EGNSVMYYPIKFGYYEIIDVLIDYDSKIIG), 132–161 (KGSVPLFYAIKYRNKYALQQLLSKDANANY), 165–194 (DNVNALHMAVLKKDISMVKLVIKHIKNLNA), 198–227 (QGSTALHYACNFQLYDITKLLLDNGADQNI), 232–261 (LDFYPIFYSVIQNDINISKLLVDYGANPNH), 265–295 (EGNTILHYCVIYNHMEIFDYIMNNYVIRCRS), 322–353 (DGLTVVHLMLYDYKEEYDNFLKKLIPYCNLNY), and 357–395 (TGNTILHLIAENNIWNKFDNLLNVKKLNIFIRNNNGKTV).

This is Putative ankyrin repeat protein L371 from Acanthamoeba polyphaga mimivirus (APMV).